We begin with the raw amino-acid sequence, 453 residues long: MEASLLKKNQSVELTIEDLTHDGSGVGKIDGYPLFIPNALPGEKITAKITKLNKNYGFARMENIEVVSAERVEPPCAVYSKCGGCSLQHLSYDGQLAFKRNQVEETMKRIGKLNVEVPDTLGMENPWRYRNKSQVPVGFVNGKLTAGFYQKRSHDIIDMSTCLIHNEKGDVAVQKTREILAKYGTEPYDEKTGKGDIRHIMTRFAHTTGQLMIVLVTTKERLPFKAEIIQDLTNQLEVTSIVQNINPQKTNVIFGDRTKTLWGSDIIEDTIHGIRFAISARSFYQVNPLQTEVLYQQAIDSAELTGEETVIDAYCGIGSISLCLAKKAKHVYGVEIVDQAIQDARANAELNNLTNTTFETGKAEEVIPQWYKNGIVADVLVVDPPRKGCDETLLETILAMKPKKVVYVSCNPGTLARDMKILTEGGYEAKKVQPVDMFPMTTHIEAVTVLTLK.

The region spanning 5 to 63 (LLKKNQSVELTIEDLTHDGSGVGKIDGYPLFIPNALPGEKITAKITKLNKNYGFARMEN) is the TRAM domain. Positions 76, 82, 85, and 162 each coordinate [4Fe-4S] cluster. S-adenosyl-L-methionine contacts are provided by Gln285, Tyr314, Glu335, and Asp383. The active-site Nucleophile is the Cys410.

Belongs to the class I-like SAM-binding methyltransferase superfamily. RNA M5U methyltransferase family.

This is an uncharacterized protein from Listeria innocua serovar 6a (strain ATCC BAA-680 / CLIP 11262).